The following is a 296-amino-acid chain: 33 kDa chaperonin (296 aa).

2 disulfide bridges follow: Cys233–Cys235 and Cys267–Cys270.

It belongs to the HSP33 family. In terms of processing, under oxidizing conditions two disulfide bonds are formed involving the reactive cysteines. Under reducing conditions zinc is bound to the reactive cysteines and the protein is inactive.

Its subcellular location is the cytoplasm. Redox regulated molecular chaperone. Protects both thermally unfolding and oxidatively damaged proteins from irreversible aggregation. Plays an important role in the bacterial defense system toward oxidative stress. The sequence is that of 33 kDa chaperonin from Actinobacillus pleuropneumoniae serotype 5b (strain L20).